Reading from the N-terminus, the 889-residue chain is Alanine--tRNA ligase (889 aa).

Positions 574, 578, 682, and 686 each coordinate Zn(2+).

The protein belongs to the class-II aminoacyl-tRNA synthetase family. Requires Zn(2+) as cofactor.

The protein resides in the cytoplasm. It carries out the reaction tRNA(Ala) + L-alanine + ATP = L-alanyl-tRNA(Ala) + AMP + diphosphate. Functionally, catalyzes the attachment of alanine to tRNA(Ala) in a two-step reaction: alanine is first activated by ATP to form Ala-AMP and then transferred to the acceptor end of tRNA(Ala). Also edits incorrectly charged Ser-tRNA(Ala) and Gly-tRNA(Ala) via its editing domain. The polypeptide is Alanine--tRNA ligase (Orientia tsutsugamushi (strain Ikeda) (Rickettsia tsutsugamushi)).